A 518-amino-acid polypeptide reads, in one-letter code: Endoglucanase 18 (518 aa).

At 1–35 (MANCVRCCCWLLVLMLMALAITAAVVFVRYKNGEG) the chain is on the cytoplasmic side. A helical membrane pass occupies residues 36–56 (VFPFPGVPGAVDHKYADALAV). Residues 57–518 (ALQFFQVQKS…STSSLARSLS (462 aa)) are Extracellular-facing. Residue asparagine 71 is glycosylated (N-linked (GlcNAc...) asparagine). Catalysis depends on aspartate 101, which acts as the Nucleophile. Asparagine 214, asparagine 251, and asparagine 272 each carry an N-linked (GlcNAc...) asparagine glycan. Histidine 436 is a catalytic residue. Asparagine 477 is a glycosylation site (N-linked (GlcNAc...) asparagine). Active-site residues include aspartate 482 and glutamate 491.

This sequence belongs to the glycosyl hydrolase 9 (cellulase E) family.

It localises to the membrane. The catalysed reaction is Endohydrolysis of (1-&gt;4)-beta-D-glucosidic linkages in cellulose, lichenin and cereal beta-D-glucans.. This chain is Endoglucanase 18, found in Oryza sativa subsp. japonica (Rice).